A 259-amino-acid polypeptide reads, in one-letter code: Phosphate import ATP-binding protein PstB (259 aa).

One can recognise an ABC transporter domain in the interval 11–254 (AEARNLNFYY…PQDKRTEDYI (244 aa)). Residue 43-50 (GPSGCGKS) participates in ATP binding.

The protein belongs to the ABC transporter superfamily. Phosphate importer (TC 3.A.1.7) family. The complex is composed of two ATP-binding proteins (PstB), two transmembrane proteins (PstC and PstA) and a solute-binding protein (PstS).

The protein resides in the cell inner membrane. It catalyses the reaction phosphate(out) + ATP + H2O = ADP + 2 phosphate(in) + H(+). Part of the ABC transporter complex PstSACB involved in phosphate import. Responsible for energy coupling to the transport system. This is Phosphate import ATP-binding protein PstB from Dechloromonas aromatica (strain RCB).